Here is a 1163-residue protein sequence, read N- to C-terminus: Actin cross-linking toxin VgrG1 (1163 aa).

One can recognise an ACD domain in the interval 728–1163 (TPDFPTHFPK…NPQEWQRIIA (436 aa)). 739–743 (SIGIE) provides a ligand contact to ATP. Mg(2+)-binding residues include Glu743 and Glu805. Ser808 serves as a coordination point for ATP. Gln889 contributes to the Mg(2+) binding site. Residue Arg995 coordinates ATP. Position 1066 (Glu1066) interacts with Mg(2+).

It belongs to the VgrG protein family. In terms of assembly, interacts with protein VC1417. The cofactor is Mg(2+).

The protein resides in the secreted. It localises to the host cytoplasm. Its subcellular location is the host cytosol. Its function is as follows. Part of the type VI secretion system (T6SS) specialized secretion system, which delivers several virulence factors in both prokaryotic and eukaryotic cells during infection. Forms the spike at the tip of the elongating tube probably formed by hemolysin co-regulated protein/Hcp. Allows the delivery of the TseL antibacterial toxin to target cells where it exerts its toxicity. Also acts directly as an actin-directed toxin that catalyzes the covalent cross-linking of host cytoplasmic monomeric actin. Mediates the cross-link between 'Lys-50' of one monomer and 'Glu-270' of another actin monomer, resulting in formation of highly toxic actin oligomers that cause cell rounding. The toxin can be highly efficient at very low concentrations by acting on formin homology family proteins: toxic actin oligomers bind with high affinity to formins and adversely affect both nucleation and elongation abilities of formins, causing their potent inhibition in both profilin-dependent and independent manners. Acts as an acid--amino-acid ligase that transfers the gamma-phosphoryl group of ATP to the 'Glu-270' actin residue, resulting in the formation of an activated acyl phosphate intermediate. This intermediate is further hydrolyzed and the energy of hydrolysis is utilized for the formation of the amide bond between actin subunits. The chain is Actin cross-linking toxin VgrG1 from Vibrio cholerae serotype O1 (strain ATCC 39315 / El Tor Inaba N16961).